We begin with the raw amino-acid sequence, 356 residues long: MAGLKLQAVTKSWDGKTQVIKPLTLDVADGEFIVMVGPSGCGKSTLLRMVAGLERVTEGDIWINDQRVTEMEPKDRGIAMVFQNYALYPHMSVEENMAWGLKIRGMGKQQIAERVKEAARILELDGLLKRRPRELSGGQRQRVAMGRAIVRDPAVFLFDEPLSNLDAKLRVQMRLELQQLHRRLKTTSLYVTHDQVEAMTLAQRVMVMNGGVAEQIGTPVEVYEKPASLFVASFIGSPAMNLLTGRVNNEGTHFELDGGIELPLNGGYRQYAGRKMTLGIRPEHIVLSSQAEGGVPLVMDTLEILGADNLAHGRWGEQKLVVRLAHQERPTAGSTLWLHLAENQLHLFDGETGQRV.

An ABC transporter domain is found at 4–235 (LKLQAVTKSW…PASLFVASFI (232 aa)). ATP is bound at residue 37–44 (GPSGCGKS).

Belongs to the ABC transporter superfamily. sn-glycerol-3-phosphate importer (TC 3.A.1.1.3) family. The complex is composed of two ATP-binding proteins (UgpC), two transmembrane proteins (UgpA and UgpE) and a solute-binding protein (UgpB).

The protein localises to the cell inner membrane. It carries out the reaction sn-glycerol 3-phosphate(out) + ATP + H2O = sn-glycerol 3-phosphate(in) + ADP + phosphate + H(+). Functionally, part of the ABC transporter complex UgpBAEC involved in sn-glycerol-3-phosphate (G3P) import. Responsible for energy coupling to the transport system. In Shigella boydii serotype 4 (strain Sb227), this protein is sn-glycerol-3-phosphate import ATP-binding protein UgpC.